The sequence spans 186 residues: Peptidyl-tRNA hydrolase (186 aa).

A tRNA-binding site is contributed by Y14. H19 functions as the Proton acceptor in the catalytic mechanism. Positions 64, 66, and 112 each coordinate tRNA.

It belongs to the PTH family. Monomer.

It localises to the cytoplasm. It carries out the reaction an N-acyl-L-alpha-aminoacyl-tRNA + H2O = an N-acyl-L-amino acid + a tRNA + H(+). Its function is as follows. Hydrolyzes ribosome-free peptidyl-tRNAs (with 1 or more amino acids incorporated), which drop off the ribosome during protein synthesis, or as a result of ribosome stalling. Catalyzes the release of premature peptidyl moieties from peptidyl-tRNA molecules trapped in stalled 50S ribosomal subunits, and thus maintains levels of free tRNAs and 50S ribosomes. The polypeptide is Peptidyl-tRNA hydrolase (Mycoplasma capricolum subsp. capricolum (strain California kid / ATCC 27343 / NCTC 10154)).